A 419-amino-acid chain; its full sequence is Voltage-gated potassium channel subunit beta-1 (419 aa).

Residues 1 to 52 form a disordered region; the sequence is MLAARTGAAGSQISEENTKLRRQSGFSVAGKDKSPKKASENAKDSSLSPSGE. Residues 30–43 show a composition bias toward basic and acidic residues; sequence GKDKSPKKASENAK. T108, W109, Q115, and D137 together coordinate NADP(+). The Proton donor/acceptor role is filled by Y142. Positions 210, 240, 241, 266, 295, 296, 297, 298, 299, 300, 306, 316, 375, 377, 381, 384, and 385 each coordinate NADP(+).

Belongs to the shaker potassium channel beta subunit family. Homotetramer. Interaction with tetrameric potassium channel alpha subunits gives rise to a heterooctamer. Identified in potassium channel complexes containing KCNA1, KCNA2, KCNA4, KCNA5, KCNA6, KCNAB1 and KCNAB2. Part of a complex containing KCNA1, KCNA4 and LGI1; interaction with LGI1 inhibits down-regulation of KCNA1 channel activity. Interacts with the dimer formed by GNB1 and GNG2; this enhances KCNA1 binding. Interacts with SQSTM1. In brain, expression is most prominent in caudate nucleus, hippocampus and thalamus. Significant expression also detected in amygdala and subthalamic nucleus. Also expressed in both healthy and cardiomyopathic heart. Up to four times more abundant in left ventricle than left atrium.

Its subcellular location is the cytoplasm. The protein resides in the membrane. It localises to the cell membrane. It catalyses the reaction a primary alcohol + NADP(+) = an aldehyde + NADPH + H(+). The enzyme catalyses a secondary alcohol + NADP(+) = a ketone + NADPH + H(+). Functionally, regulatory subunit of the voltage-gated potassium (Kv) Shaker channels composed of pore-forming and potassium-conducting alpha subunits and of regulatory beta subunits. The beta-1/KCNAB1 cytoplasmic subunit mediates closure of delayed rectifier potassium channels by physically obstructing the pore via its N-terminal domain and increases the speed of channel closure for other family members. Promotes the inactivation of Kv1.1/KCNA1, Kv1.2/KCNA2, Kv1.4/KCNA4, Kv1.5/KCNA5 and Kv1.6/KCNA6 alpha subunit-containing channels. Displays nicotinamide adenine dinucleotide phosphate (NADPH)-dependent aldoketoreductase activity by catalyzing the NADPH-dependent reduction of a variety of endogenous aldehydes and ketones. The binding of NADPH is required for efficient down-regulation of potassium channel activity. Oxidation of the bound NADPH restrains N-terminal domain from blocking the channel, thereby decreasing N-type inactivation of potassium channel activity. Its function is as follows. Isoform KvB1.2 shows no effect on KCNA1, KCNA2 or KCNB1. This Homo sapiens (Human) protein is Voltage-gated potassium channel subunit beta-1.